The following is a 288-amino-acid chain: Stress response protein YhaX (288 aa).

This is Stress response protein YhaX (yhaX) from Bacillus subtilis (strain 168).